Reading from the N-terminus, the 275-residue chain is Ribosomal RNA small subunit methyltransferase A (275 aa).

Residues Asn28, Leu30, Gly55, Glu77, Asp103, and Asn123 each contribute to the S-adenosyl-L-methionine site.

It belongs to the class I-like SAM-binding methyltransferase superfamily. rRNA adenine N(6)-methyltransferase family. RsmA subfamily.

The protein localises to the cytoplasm. It catalyses the reaction adenosine(1518)/adenosine(1519) in 16S rRNA + 4 S-adenosyl-L-methionine = N(6)-dimethyladenosine(1518)/N(6)-dimethyladenosine(1519) in 16S rRNA + 4 S-adenosyl-L-homocysteine + 4 H(+). Specifically dimethylates two adjacent adenosines (A1518 and A1519) in the loop of a conserved hairpin near the 3'-end of 16S rRNA in the 30S particle. May play a critical role in biogenesis of 30S subunits. This is Ribosomal RNA small subunit methyltransferase A from Rhizobium etli (strain CIAT 652).